A 375-amino-acid polypeptide reads, in one-letter code: Succinyl-diaminopimelate desuccinylase (375 aa).

His-66 contributes to the Zn(2+) binding site. The active site involves Asp-68. Residue Asp-99 participates in Zn(2+) binding. The Proton acceptor role is filled by Glu-133. Glu-134, Glu-162, and His-348 together coordinate Zn(2+).

Belongs to the peptidase M20A family. DapE subfamily. As to quaternary structure, homodimer. Requires Zn(2+) as cofactor. It depends on Co(2+) as a cofactor.

The enzyme catalyses N-succinyl-(2S,6S)-2,6-diaminopimelate + H2O = (2S,6S)-2,6-diaminopimelate + succinate. The protein operates within amino-acid biosynthesis; L-lysine biosynthesis via DAP pathway; LL-2,6-diaminopimelate from (S)-tetrahydrodipicolinate (succinylase route): step 3/3. Its function is as follows. Catalyzes the hydrolysis of N-succinyl-L,L-diaminopimelic acid (SDAP), forming succinate and LL-2,6-diaminopimelate (DAP), an intermediate involved in the bacterial biosynthesis of lysine and meso-diaminopimelic acid, an essential component of bacterial cell walls. This is Succinyl-diaminopimelate desuccinylase from Escherichia coli O1:K1 / APEC.